A 255-amino-acid polypeptide reads, in one-letter code: Aspartate/glutamate leucyltransferase (255 aa).

This sequence belongs to the R-transferase family. Bpt subfamily.

It is found in the cytoplasm. The catalysed reaction is N-terminal L-glutamyl-[protein] + L-leucyl-tRNA(Leu) = N-terminal L-leucyl-L-glutamyl-[protein] + tRNA(Leu) + H(+). It carries out the reaction N-terminal L-aspartyl-[protein] + L-leucyl-tRNA(Leu) = N-terminal L-leucyl-L-aspartyl-[protein] + tRNA(Leu) + H(+). Functions in the N-end rule pathway of protein degradation where it conjugates Leu from its aminoacyl-tRNA to the N-termini of proteins containing an N-terminal aspartate or glutamate. The chain is Aspartate/glutamate leucyltransferase from Leptospira borgpetersenii serovar Hardjo-bovis (strain JB197).